The chain runs to 227 residues: MARGVFITATGTDIGKTYVTALIIKKLREVNINCGYYKAALSGAERIDSKLIAGDANYVYNIANIKGDPNDAVSYIFQQAVSPHLAAKLNNVEISMDKIKKDFSCIKNKYDYITVEGSGGIICPISMGKEKIMLENIVKSLKLPAIVIADAGLGTINNTILTLQYMKKKNIPIKMILLNNYNHENIIHIENKRYLSDNLSIPVYTCCKDSNNLEIPVERLIEFYEEI.

13 to 18 contributes to the ATP binding site; it reads DIGKTY. Thr17 is a binding site for Mg(2+). Lys38 is a catalytic residue. Ser42 is a substrate binding site. ATP contacts are provided by residues Asp55, 116–119, and 179–180; these read EGSG and NN. Positions 55 and 116 each coordinate Mg(2+).

It belongs to the dethiobiotin synthetase family. In terms of assembly, homodimer. Mg(2+) serves as cofactor.

The protein resides in the cytoplasm. The catalysed reaction is (7R,8S)-7,8-diammoniononanoate + CO2 + ATP = (4R,5S)-dethiobiotin + ADP + phosphate + 3 H(+). The protein operates within cofactor biosynthesis; biotin biosynthesis; biotin from 7,8-diaminononanoate: step 1/2. Functionally, catalyzes a mechanistically unusual reaction, the ATP-dependent insertion of CO2 between the N7 and N8 nitrogen atoms of 7,8-diaminopelargonic acid (DAPA, also called 7,8-diammoniononanoate) to form a ureido ring. This chain is ATP-dependent dethiobiotin synthetase BioD, found in Clostridium botulinum (strain Loch Maree / Type A3).